The sequence spans 485 residues: Glutamyl-tRNA(Gln) amidotransferase subunit A (485 aa).

Active-site charge relay system residues include lysine 78 and serine 153. Serine 177 serves as the catalytic Acyl-ester intermediate.

This sequence belongs to the amidase family. GatA subfamily. Heterotrimer of A, B and C subunits.

It carries out the reaction L-glutamyl-tRNA(Gln) + L-glutamine + ATP + H2O = L-glutaminyl-tRNA(Gln) + L-glutamate + ADP + phosphate + H(+). Functionally, allows the formation of correctly charged Gln-tRNA(Gln) through the transamidation of misacylated Glu-tRNA(Gln) in organisms which lack glutaminyl-tRNA synthetase. The reaction takes place in the presence of glutamine and ATP through an activated gamma-phospho-Glu-tRNA(Gln). The sequence is that of Glutamyl-tRNA(Gln) amidotransferase subunit A from Bacillus cereus (strain AH820).